The sequence spans 944 residues: Protein translocase subunit SecA (944 aa).

ATP-binding positions include glutamine 77, 95-99 (GEGKT), and aspartate 484. The segment at 920-944 (EQEKQTRKKKKKKPHEDESSKTKIG) is disordered. A compositionally biased stretch (basic and acidic residues) spans 933 to 944 (PHEDESSKTKIG).

It belongs to the SecA family. As to quaternary structure, monomer and homodimer. Part of the essential Sec protein translocation apparatus which comprises SecA, SecYEG and auxiliary proteins SecDF. Other proteins may also be involved.

It is found in the cell membrane. Its subcellular location is the cytoplasm. The catalysed reaction is ATP + H2O + cellular proteinSide 1 = ADP + phosphate + cellular proteinSide 2.. Its function is as follows. Part of the Sec protein translocase complex. Interacts with the SecYEG preprotein conducting channel. Has a central role in coupling the hydrolysis of ATP to the transfer of proteins into and across the cell membrane, serving as an ATP-driven molecular motor driving the stepwise translocation of polypeptide chains across the membrane. This Mycoplasma mycoides subsp. mycoides SC (strain CCUG 32753 / NCTC 10114 / PG1) protein is Protein translocase subunit SecA.